The chain runs to 346 residues: tRNA pseudouridine synthase D (346 aa).

Residue Asp-83 is the Nucleophile of the active site. A TRUD domain is found at 159–305 (GVPNYFGEQR…LKQERRALRV (147 aa)).

The protein belongs to the pseudouridine synthase TruD family.

The enzyme catalyses uridine(13) in tRNA = pseudouridine(13) in tRNA. In terms of biological role, responsible for synthesis of pseudouridine from uracil-13 in transfer RNAs. The polypeptide is tRNA pseudouridine synthase D (Hydrogenovibrio crunogenus (strain DSM 25203 / XCL-2) (Thiomicrospira crunogena)).